The following is a 616-amino-acid chain: Dihydroxy-acid dehydratase (616 aa).

Asp-81 contacts Mg(2+). A [2Fe-2S] cluster-binding site is contributed by Cys-122. Positions 123 and 124 each coordinate Mg(2+). An N6-carboxylysine modification is found at Lys-124. Cys-195 contributes to the [2Fe-2S] cluster binding site. Glu-491 serves as a coordination point for Mg(2+). The active-site Proton acceptor is Ser-517.

It belongs to the IlvD/Edd family. In terms of assembly, homodimer. [2Fe-2S] cluster is required as a cofactor. Requires Mg(2+) as cofactor.

It catalyses the reaction (2R)-2,3-dihydroxy-3-methylbutanoate = 3-methyl-2-oxobutanoate + H2O. The enzyme catalyses (2R,3R)-2,3-dihydroxy-3-methylpentanoate = (S)-3-methyl-2-oxopentanoate + H2O. It participates in amino-acid biosynthesis; L-isoleucine biosynthesis; L-isoleucine from 2-oxobutanoate: step 3/4. It functions in the pathway amino-acid biosynthesis; L-valine biosynthesis; L-valine from pyruvate: step 3/4. Functions in the biosynthesis of branched-chain amino acids. Catalyzes the dehydration of (2R,3R)-2,3-dihydroxy-3-methylpentanoate (2,3-dihydroxy-3-methylvalerate) into 2-oxo-3-methylpentanoate (2-oxo-3-methylvalerate) and of (2R)-2,3-dihydroxy-3-methylbutanoate (2,3-dihydroxyisovalerate) into 2-oxo-3-methylbutanoate (2-oxoisovalerate), the penultimate precursor to L-isoleucine and L-valine, respectively. This Azoarcus sp. (strain BH72) protein is Dihydroxy-acid dehydratase.